The sequence spans 244 residues: MNNYKLMIQYDGGRYKGWQRLGNGENTIQGKIETVLSEMVGRKIEIIGSGRTDAGVHALGQVANVKLSENFTVKEVKEYLNRYLPHDISVTEVTLVPDRFHSRYNAKDKTYLYKIWNEDYTHPFMRKYSLHIEKKLHIDNMVKASQLFVGEHDFTAFSNAKSKKKTNTRTIHSITIQDNQGFIDIRVCGDGFLYNMVRKMVGTLIEVGLGEKEPEQVLTILESKDRSQAGFADATGLYLEGISF.

Aspartate 53 functions as the Nucleophile in the catalytic mechanism. Tyrosine 111 is a substrate binding site.

It belongs to the tRNA pseudouridine synthase TruA family. In terms of assembly, homodimer.

It carries out the reaction uridine(38/39/40) in tRNA = pseudouridine(38/39/40) in tRNA. Formation of pseudouridine at positions 38, 39 and 40 in the anticodon stem and loop of transfer RNAs. This is tRNA pseudouridine synthase A from Bacillus sp. (strain KSM-64).